A 110-amino-acid chain; its full sequence is Small EDRK-rich factor 1 (110 aa).

Over residues 1–30 the composition is skewed to basic and acidic residues; sequence MARGNQRELARQKNMKKTQEISKGKRKEDS. Positions 1 to 61 are disordered; that stretch reads MARGNQRELA…GPHLPLKAPR (61 aa). Positions 11 to 17 are required for SNCA binding; the sequence is RQKNMKK. The segment covering 34 to 50 has biased composition (low complexity); the sequence is SQRKQSSGGQKSESKMS.

This sequence belongs to the SERF family. In terms of assembly, interacts with SNCA; this interaction promotes the aggregation of SNCA. As to expression, isoform Long is predominantly expressed in heart, brain and skeletal muscle. Isoform Short and Isoform Long are expressed throughout the central nervous system, including spinal cord.

The protein resides in the cytoplasm. It is found in the cytosol. Its subcellular location is the nucleus. Functionally, positive regulator of amyloid protein aggregation and proteotoxicity. Induces conformational changes in amyloid proteins, such as APP, HTT, and SNCA, driving them into compact formations preceding the formation of aggregates. The chain is Small EDRK-rich factor 1 (SERF1A) from Homo sapiens (Human).